A 132-amino-acid chain; its full sequence is Agouti-signaling protein (132 aa).

An N-terminal signal peptide occupies residues 1-22 (MDVTRLLLATLLVFLCFFTAYS). A glycan (N-linked (GlcNAc...) asparagine) is linked at N39. The disordered stretch occupies residues 61–87 (QISRKEAEKKRSSKKEASMKKVARPRT). The span at 63–79 (SRKEAEKKRSSKKEASM) shows a compositional bias: basic and acidic residues. 5 disulfides stabilise this stretch: C93/C108, C100/C114, C107/C125, C111/C132, and C116/C123. The Agouti domain occupies 93–132 (CVATRDSCKPPAPACCDPCASCQCRFFRSACSCRVLSLNC).

The protein resides in the secreted. Involved in the regulation of melanogenesis. The binding of ASP to MC1R precludes alpha-MSH initiated signaling and thus blocks production of cAMP, leading to a down-regulation of eumelanogenesis (brown/black pigment) and thus increasing synthesis of pheomelanin (yellow/red pigment). This Macaca maura (Moor macaque) protein is Agouti-signaling protein (ASIP).